The sequence spans 217 residues: Glutathione S-transferase U20 (217 aa).

The GST N-terminal domain maps to 3-82 (NLPILLDYWP…YVDEAWPEKN (80 aa)). Residues S13, I54, and S67 each coordinate glutathione. The 121-residue stretch at 88 to 208 (DPYGRAQARF…LPDSEKIVAY (121 aa)) folds into the GST C-terminal domain.

Belongs to the GST superfamily. Tau family. In terms of assembly, homodimerization. Interacts with JAR1/FIN219 under continuous far red (cFR) light to stimulate JAR1/FIN219 activity and substrate selectivity. Mostly associated with vascular tissues, especially near hydathodes.

It is found in the nucleus. The protein localises to the cytoplasm. Its subcellular location is the cytosol. The enzyme catalyses RX + glutathione = an S-substituted glutathione + a halide anion + H(+). Its activity is regulated as follows. Activated by JAR1/FIN219. Functionally, exhibits glutathione-dependent thiol transferase activities. Can use glutathione (GSH) and 1-chloro-2,4-dinitrobenzene (CDNB) as substrates. Involved in the regulation of far-red light influence on development. Regulator of the interplay between light and JA signaling by increasing JAR1/FIN219 efficiency. Maybe involved in gravitropic signal transduction. This is Glutathione S-transferase U20 from Arabidopsis thaliana (Mouse-ear cress).